The sequence spans 861 residues: Linoleate 9S-lipoxygenase 2 (861 aa).

The region spanning 29-160 is the PLAT domain; it reads NALDFTDLAG…RYKSDRIFFV (132 aa). The Lipoxygenase domain occupies 163 to 861; sequence PYLPSKTPEL…GKGIPNSVSI (699 aa). Positions 212–246 are disordered; that stretch reads EGKENVRTTLGGSAEYPYPRRGRTGRPPTRTDPKS. Fe cation-binding residues include His-522, His-527, His-713, Asn-717, and Ile-861.

Belongs to the lipoxygenase family. In terms of assembly, monomer. Requires Fe cation as cofactor. Highly expressed in tubers and roots. Detected in flower buds and leaves.

The protein localises to the cytoplasm. It catalyses the reaction (9Z,12Z)-octadecadienoate + O2 = (9S)-hydroperoxy-(10E,12Z)-octadecadienoate. It participates in lipid metabolism; oxylipin biosynthesis. Functionally, plant lipoxygenases may be involved in a number of diverse aspects of plant physiology including growth and development, pest resistance, and senescence or responses to wounding. Catalyzes the hydroperoxidation of lipids containing a cis,cis-1,4-pentadiene structure. Linoleic acid is the preferred substrate, but is also active with linolenic and arachidonic acids. The sequence is that of Linoleate 9S-lipoxygenase 2 (LOX1.2) from Solanum tuberosum (Potato).